Consider the following 572-residue polypeptide: Urease subunit alpha (572 aa).

Residues 133-572 enclose the Urease domain; it reads GGIDLHVHYI…TSLSQRYFLF (440 aa). Residues His-138, His-140, and Lys-221 each coordinate Ni(2+). Lys-221 bears the N6-carboxylysine mark. Position 223 (His-223) interacts with substrate. Ni(2+) contacts are provided by His-250 and His-276. The Proton donor role is filled by His-324. Asp-364 contributes to the Ni(2+) binding site.

It belongs to the metallo-dependent hydrolases superfamily. Urease alpha subunit family. As to quaternary structure, heterotrimer of UreA (gamma), UreB (beta) and UreC (alpha) subunits. Three heterotrimers associate to form the active enzyme. The cofactor is Ni cation. Post-translationally, carboxylation allows a single lysine to coordinate two nickel ions.

The protein resides in the cytoplasm. It carries out the reaction urea + 2 H2O + H(+) = hydrogencarbonate + 2 NH4(+). It participates in nitrogen metabolism; urea degradation; CO(2) and NH(3) from urea (urease route): step 1/1. Ureolysis may allow urea to be employed as a nitrogen source for growth and produces ammonia which may protect from killing at low pH. This Streptococcus salivarius (strain 57.I) protein is Urease subunit alpha.